The following is a 93-amino-acid chain: Integration host factor subunit beta (93 aa).

It belongs to the bacterial histone-like protein family. As to quaternary structure, heterodimer of an alpha and a beta chain.

This protein is one of the two subunits of integration host factor, a specific DNA-binding protein that functions in genetic recombination as well as in transcriptional and translational control. The protein is Integration host factor subunit beta of Vibrio vulnificus (strain YJ016).